The following is a 122-amino-acid chain: Putative 2'-deoxynucleoside 5'-phosphate N-hydrolase 1 (122 aa).

Residues 4-10 (FLSGSIR), Tyr-19, His-37, Glu-83, and 105-107 (SAM) each bind substrate.

It belongs to the 2'-deoxynucleoside 5'-phosphate N-hydrolase 1 family. In terms of assembly, monomer and homodimer.

The catalysed reaction is a pyrimidine 2'-deoxyribonucleoside 5'-phosphate + H2O = a pyrimidine nucleobase + 2-deoxy-D-ribose 5-phosphate. The enzyme catalyses a purine 2'-deoxyribonucleoside 5'-phosphate + H2O = a purine nucleobase + 2-deoxy-D-ribose 5-phosphate. Its function is as follows. Catalyzes the cleavage of the N-glycosidic bond of deoxyribonucleoside 5'-monophosphates to yield deoxyribose 5-phosphate and a purine or pyrimidine base. This is Putative 2'-deoxynucleoside 5'-phosphate N-hydrolase 1 from Methanococcoides burtonii (strain DSM 6242 / NBRC 107633 / OCM 468 / ACE-M).